We begin with the raw amino-acid sequence, 336 residues long: N-acetyl-gamma-glutamyl-phosphate reductase (336 aa).

The active site involves C143.

The protein belongs to the NAGSA dehydrogenase family. Type 1 subfamily.

It is found in the cytoplasm. It catalyses the reaction N-acetyl-L-glutamate 5-semialdehyde + phosphate + NADP(+) = N-acetyl-L-glutamyl 5-phosphate + NADPH + H(+). The protein operates within amino-acid biosynthesis; L-arginine biosynthesis; N(2)-acetyl-L-ornithine from L-glutamate: step 3/4. Catalyzes the NADPH-dependent reduction of N-acetyl-5-glutamyl phosphate to yield N-acetyl-L-glutamate 5-semialdehyde. This Dictyoglomus thermophilum (strain ATCC 35947 / DSM 3960 / H-6-12) protein is N-acetyl-gamma-glutamyl-phosphate reductase.